We begin with the raw amino-acid sequence, 386 residues long: Acetate kinase (386 aa).

Asn-7 is a Mg(2+) binding site. Lys-14 serves as a coordination point for ATP. A substrate-binding site is contributed by Arg-78. The active-site Proton donor/acceptor is the Asp-135. ATP is bound by residues 195–199 (HLGNG), 268–270 (DMR), and 316–320 (GIGEN). Residue Glu-370 coordinates Mg(2+).

It belongs to the acetokinase family. In terms of assembly, homodimer. Requires Mg(2+) as cofactor. The cofactor is Mn(2+).

The protein localises to the cytoplasm. The enzyme catalyses acetate + ATP = acetyl phosphate + ADP. Its pathway is metabolic intermediate biosynthesis; acetyl-CoA biosynthesis; acetyl-CoA from acetate: step 1/2. In terms of biological role, catalyzes the formation of acetyl phosphate from acetate and ATP. Can also catalyze the reverse reaction. The sequence is that of Acetate kinase from Pseudarthrobacter chlorophenolicus (strain ATCC 700700 / DSM 12829 / CIP 107037 / JCM 12360 / KCTC 9906 / NCIMB 13794 / A6) (Arthrobacter chlorophenolicus).